The chain runs to 940 residues: MAFNKLESSNNQEIISEEVGILKELLDDATRGIAGEQGLTTIQHLVELYDEGDYEALTQAISEMTNDDMVVASRYFSLLPLLINISEDVDLAYEVNRKNNIDESYLGKLSETFDVVAESDNARDILENVNVVPVLTAHPTQVQRKTMLELTNHIHELLRKHRDVKDGLINKDKWYADLRRYVEIMMKTDIIREKKLKVKNEITNVMEYYNSSLIKAITKLSHEFKRLAVEKGIELDNPTPITMGMWIGGDRDGNPFVTAETLKLSATLQSEVILNYYIEKVDNLYRSFSLSSRLTEVSETVAEMAKLSPDTSVYRENEPYRRAFSYIQSKLIQTLLFFKAGNFSNERAAKRLSENVRLGSVSTGEVVADFVHDRLSQSLQAVSQQTTEFYETAEAFHDDLLAIKNSLLENDDSVLISGDFEELLQAVEVFGFYLATIDMRQDSSVHEACVAELLKSANIVDNYSELTEVEKVAVLLKELQEDPRTLSSTNVSKSETLEKELAIFRTARLLKDYLGEEVIKQHIISHTESVSDMFELAILLKEVGLVDTERARVQIVPLFETIEDLENSNEIMKQYLGYDIVKRWIKNSNNYQEIMLGYSDSNKDGGYLSSGWTLYKAQNELTKIGEERGIKITFFHGRGGTVGRGGGPSYDAITSQPFGTIKDRIRLTEQGEVIGNKYGNKDAAYYNLEMLVSATLDRMVTRQITDPDELVDFREIMDSIVQDSNGIYRDLVFGNEHFYDYFFEASPIKEVSSLNIGSRPAARKTITDISGLRAIPWVFSWSQNRIMLPGWYGVGSAFNHYIEAEEGNLEKLQHMFETWPFFRSLLSNVDMVLSKSDMNIAFHYAQLAESEEVRSVFNIILDEWQLTKNVILAIEKHDDFLEESPSLKASLGFRLPYFNVLNYIQIELIKRLRNNNLTDDEISLIHITINGIATGLRNSG.

Residues His-138 and Lys-603 contribute to the active site.

The protein belongs to the PEPCase type 1 family. Requires Mg(2+) as cofactor.

The enzyme catalyses oxaloacetate + phosphate = phosphoenolpyruvate + hydrogencarbonate. In terms of biological role, forms oxaloacetate, a four-carbon dicarboxylic acid source for the tricarboxylic acid cycle. This is Phosphoenolpyruvate carboxylase from Streptococcus thermophilus (strain ATCC BAA-491 / LMD-9).